A 302-amino-acid polypeptide reads, in one-letter code: AP-1 complex-associated regulatory protein (302 aa).

At Ser-29 the chain carries Phosphoserine. The interval 78–138 (DSIAEKQKDL…ERQRIVQQYH (61 aa)) is interaction with AP1G1. The stretch at 80–138 (IAEKQKDLDKKIQKELALQEEKLRLEEEALYAAQREAARAAKQRKLLEQERQRIVQQYH) forms a coiled coil. Residues 188-206 (CDLMTKTKSTSGNDDSTSL) are compositionally biased toward polar residues. Residues 188-258 (CDLMTKTKST…TSASDDSNGL (71 aa)) form a disordered region. Residues 199-215 (GNDDSTSLDLEWEDEEG) form a sufficient for association with the Arp2/3 complex region. Over residues 221–233 (PMRERSKTEEDIL) the composition is skewed to basic and acidic residues. The residue at position 226 (Ser-226) is a Phosphoserine. Phosphothreonine is present on Thr-228. The span at 242–255 (KKTGSNPTSASDDS) shows a compositional bias: polar residues.

As to quaternary structure, interacts (via coiled-coil domain) with AP1G1 (via GAE domain). Interacts with KIF5B. Associates with the Arp2/3 complex. Palmitoylated.

It is found in the golgi apparatus. It localises to the trans-Golgi network. The protein localises to the late endosome. Its subcellular location is the early endosome. Functionally, necessary for adaptor protein complex 1 (AP-1)-dependent transport between the trans-Golgi network and endosomes. Regulates the membrane association of AP1G1/gamma1-adaptin, one of the subunits of the AP-1 adaptor complex. The direct interaction with AP1G1/gamma1-adaptin attenuates the release of the AP-1 complex from membranes. Regulates endosomal membrane traffic via association with AP-1 and KIF5B thus linking kinesin-based plus-end-directed microtubular transport to AP-1-dependent membrane traffic. May act as effector of AP-1 in calcium-induced endo-lysosome secretion. Inhibits Arp2/3 complex function; negatively regulates cell spreading, size and motility via intracellular sequestration of the Arp2/3 complex. This is AP-1 complex-associated regulatory protein (AP1AR) from Homo sapiens (Human).